Reading from the N-terminus, the 221-residue chain is Ras-related protein Rab-27A (221 aa).

Ser2 carries the post-translational modification N-acetylserine. A Phosphoserine modification is found at Ser2. Position 16-24 (16-24) interacts with GTP; sequence GDSGVGKTS. The Effector region motif lies at 38-46; that stretch reads FITTVGIDF. GTP is bound by residues 74–78, 133–136, and 163–165; these read DTAGQ, NKSD, and SAA. The cysteines at positions 123 and 188 are disulfide-linked. Residues Cys219 and Cys221 are each lipidated (S-geranylgeranyl cysteine). At Cys221 the chain carries Cysteine methyl ester.

Belongs to the small GTPase superfamily. Rab family. Binds SYTL1, SLAC2B, MYRIP, SYTL3, SYTL4 and SYTL5. Interacts with RPH3A and RPH3A. Binds MLPH and SYTL2. Interacts with UNC13D. Does not interact with the BLOC-3 complex (heterodimer of HPS1 and HPS4). Interacts (GDP-bound form preferentially) with DENND10. As to expression, high levels in eye, intestine, lung, pancreas and spleen, and low or absent in brain, liver, heart, kidney, and skeletal muscle.

The protein resides in the membrane. It localises to the melanosome. Its subcellular location is the late endosome. The protein localises to the lysosome. The catalysed reaction is GTP + H2O = GDP + phosphate + H(+). Regulated by guanine nucleotide exchange factors (GEFs) which promote the exchange of bound GDP for free GTP, GTPase activating proteins (GAPs) which increase the GTP hydrolysis activity, and GDP dissociation inhibitors which inhibit the dissociation of the nucleotide from the GTPase. Activated by GEFs such as DENND10. In terms of biological role, small GTPase which cycles between active GTP-bound and inactive GDP-bound states. In its active state, binds to a variety of effector proteins to regulate homeostasis of late endocytic pathway, including endosomal positioning, maturation and secretion. Plays a role in cytotoxic granule exocytosis in lymphocytes. Required for both granule maturation and granule docking and priming at the immunologic synapse. The chain is Ras-related protein Rab-27A (Rab27a) from Rattus norvegicus (Rat).